Consider the following 358-residue polypeptide: 3-dehydroquinate synthase (358 aa).

NAD(+) contacts are provided by residues 70 to 75, 104 to 108, 128 to 129, K141, and K150; these read DGEAHK, GVIGD, and TT. E183, H246, and H263 together coordinate Zn(2+).

The protein belongs to the sugar phosphate cyclases superfamily. Dehydroquinate synthase family. NAD(+) serves as cofactor. The cofactor is Co(2+). It depends on Zn(2+) as a cofactor.

It localises to the cytoplasm. The catalysed reaction is 7-phospho-2-dehydro-3-deoxy-D-arabino-heptonate = 3-dehydroquinate + phosphate. It functions in the pathway metabolic intermediate biosynthesis; chorismate biosynthesis; chorismate from D-erythrose 4-phosphate and phosphoenolpyruvate: step 2/7. Catalyzes the conversion of 3-deoxy-D-arabino-heptulosonate 7-phosphate (DAHP) to dehydroquinate (DHQ). This chain is 3-dehydroquinate synthase, found in Bordetella bronchiseptica (strain ATCC BAA-588 / NCTC 13252 / RB50) (Alcaligenes bronchisepticus).